Reading from the N-terminus, the 193-residue chain is 5'RNA triphosphatase A449R (193 aa).

Requires Mn(2+) as cofactor.

The catalysed reaction is a 5'-end triphospho-ribonucleoside in mRNA + H2O = a 5'-end diphospho-ribonucleoside in mRNA + phosphate + H(+). Functionally, catalyzes the first stes of cap formation: by removing the gamma-phosphate from the 5'-triphosphate end of nascent mRNA to yield a diphosphate end. The sequence is that of 5'RNA triphosphatase A449R (A449R) from Chlorella (PBCV-1).